The following is a 434-amino-acid chain: Gamma-enolase (434 aa).

N-acetylserine is present on Ser-2. Lys-5 carries the N6-acetyllysine modification. Phosphothreonine is present on Thr-26. Residue Ser-40 coordinates Mg(2+). Tyr-44 carries the phosphotyrosine modification. Lys-60 carries the post-translational modification N6-acetyllysine; alternate. At Lys-60 the chain carries N6-succinyllysine; alternate. Lys-64 is subject to N6-acetyllysine. Residue Lys-89 is modified to N6-acetyllysine; alternate. Lys-89 bears the N6-succinyllysine; alternate mark. Substrate-binding residues include His-158 and Glu-167. N6-acetyllysine is present on residues Lys-193, Lys-197, and Lys-199. Lys-202 is modified (N6-acetyllysine; alternate). Residue Lys-202 forms a Glycyl lysine isopeptide (Lys-Gly) (interchain with G-Cter in SUMO2); alternate linkage. The active-site Proton donor is Glu-210. Lys-228 and Lys-233 each carry N6-acetyllysine; alternate. At Lys-228 the chain carries N6-succinyllysine; alternate. Lys-233 is modified (N6-(2-hydroxyisobutyryl)lysine; alternate). Residue Asp-245 participates in Mg(2+) binding. Lys-256 carries the post-translational modification N6-acetyllysine. Phosphoserine is present on Ser-263. Tyr-287 is modified (phosphotyrosine). Phosphoserine is present on Ser-291. Mg(2+) is bound by residues Glu-293 and Asp-318. Glu-293 and Asp-318 together coordinate substrate. Residues Lys-335 and Lys-343 each carry the N6-acetyllysine modification. Catalysis depends on Lys-343, which acts as the Proton acceptor. Residues 370–373 (SHRS) and Lys-394 contribute to the substrate site. Lys-406 bears the N6-acetyllysine mark.

This sequence belongs to the enolase family. In terms of assembly, mammalian enolase is composed of 3 isozyme subunits, alpha, beta and gamma, which can form homodimers or heterodimers which are cell-type and development-specific. The cofactor is Mg(2+). The alpha/alpha homodimer is expressed in embryo and in most adult tissues. The alpha/beta heterodimer and the beta/beta homodimer are found in striated muscle, and the alpha/gamma heterodimer and the gamma/gamma homodimer in neurons.

It is found in the cytoplasm. It localises to the cell membrane. It catalyses the reaction (2R)-2-phosphoglycerate = phosphoenolpyruvate + H2O. Its pathway is carbohydrate degradation; glycolysis; pyruvate from D-glyceraldehyde 3-phosphate: step 4/5. Functionally, has neurotrophic and neuroprotective properties on a broad spectrum of central nervous system (CNS) neurons. Binds, in a calcium-dependent manner, to cultured neocortical neurons and promotes cell survival. The protein is Gamma-enolase (ENO2) of Homo sapiens (Human).